The sequence spans 61 residues: Probable tautomerase SERP0934 (61 aa).

Catalysis depends on proline 2, which acts as the Proton acceptor; via imino nitrogen.

It belongs to the 4-oxalocrotonate tautomerase family.

In Staphylococcus epidermidis (strain ATCC 35984 / DSM 28319 / BCRC 17069 / CCUG 31568 / BM 3577 / RP62A), this protein is Probable tautomerase SERP0934.